The sequence spans 221 residues: GTP cyclohydrolase 1 (221 aa).

Zn(2+) contacts are provided by cysteine 109, histidine 112, and cysteine 180.

The protein belongs to the GTP cyclohydrolase I family. In terms of assembly, toroid-shaped homodecamer, composed of two pentamers of five dimers.

It catalyses the reaction GTP + H2O = 7,8-dihydroneopterin 3'-triphosphate + formate + H(+). It functions in the pathway cofactor biosynthesis; 7,8-dihydroneopterin triphosphate biosynthesis; 7,8-dihydroneopterin triphosphate from GTP: step 1/1. This is GTP cyclohydrolase 1 from Serratia proteamaculans (strain 568).